The sequence spans 385 residues: MKRITILGSSGSIGKQTLNIISKMKENVCIEGLAVGSNIKILKSQIKKFKPASVSVNSPAEAQNLKKWCISNNIKTDVYKGNTGLEKLTTMPKTDMILAAIIGAVGLKSIIAAIKAKKDIAIANKEAIVMAGSYIMKLAAENGVSVLPVDSEHSAIFQCCTDEKKSQIKRIILTASGGPFYKYDKDFSKITVEQALDHPTWKMGRKITVDSATLMNKGLEAIEASVLFGVSIDKVEIIIHPQSVVHSMVEYVDGSVIAQLSNPDMKLPIQYALTYPERLPSNIKPLNLIEINKLEFYNPDFNKFPCLSLAYYAAQKGYTVPAVMNAANEMAVASFLNKEIKFTDIAKIVGRTIKTHKISKSTSLDTFIEADYWARHYAEKLINEI.

NADPH-binding residues include serine 10, glycine 11, serine 12, isoleucine 13, glycine 36, asparagine 38, and asparagine 124. Lysine 125 lines the 1-deoxy-D-xylulose 5-phosphate pocket. Glutamate 126 serves as a coordination point for NADPH. Mn(2+) is bound at residue aspartate 150. 1-deoxy-D-xylulose 5-phosphate contacts are provided by serine 151, glutamate 152, serine 176, and histidine 198. Position 152 (glutamate 152) interacts with Mn(2+). Glycine 204 is a binding site for NADPH. 1-deoxy-D-xylulose 5-phosphate is bound by residues serine 211, asparagine 216, lysine 217, and glutamate 220. Glutamate 220 is a binding site for Mn(2+).

The protein belongs to the DXR family. It depends on Mg(2+) as a cofactor. Mn(2+) serves as cofactor.

It carries out the reaction 2-C-methyl-D-erythritol 4-phosphate + NADP(+) = 1-deoxy-D-xylulose 5-phosphate + NADPH + H(+). It participates in isoprenoid biosynthesis; isopentenyl diphosphate biosynthesis via DXP pathway; isopentenyl diphosphate from 1-deoxy-D-xylulose 5-phosphate: step 1/6. In terms of biological role, catalyzes the NADPH-dependent rearrangement and reduction of 1-deoxy-D-xylulose-5-phosphate (DXP) to 2-C-methyl-D-erythritol 4-phosphate (MEP). The sequence is that of 1-deoxy-D-xylulose 5-phosphate reductoisomerase from Endomicrobium trichonymphae.